Reading from the N-terminus, the 706-residue chain is Melanopsin (706 aa).

Residues 1 to 86 lie on the Extracellular side of the membrane; sequence MTEIPSFQPP…VWDIPPLAHY (86 aa). Asn-12, Asn-64, and Asn-69 each carry an N-linked (GlcNAc...) asparagine glycan. Residues 87–107 form a helical membrane-spanning segment; that stretch reads IVGTAVFCIGCCGMFGNAVVV. Residues 108 to 121 lie on the Cytoplasmic side of the membrane; the sequence is YSFIKSKGLRTPAN. Residues 122–142 form a helical membrane-spanning segment; the sequence is FFIINLALSDFLMNLTNMPIF. Over 143–159 the chain is Extracellular; that stretch reads AVNSAFQRWLLSDFACE. A disulfide bridge links Cys-158 with Cys-236. The chain crosses the membrane as a helical span at residues 160–180; sequence LYGFAGGLFGCLSINTLMAIS. The Cytoplasmic segment spans residues 181–201; it reads MDRYLVITKPFLVMRIVTKQR. The chain crosses the membrane as a helical span at residues 202 to 222; it reads VMFAILLLWIWSLVWALPPLF. At 223 to 248 the chain is on the extracellular side; the sequence is GWSAYVSEGFGTSCTFDYMTPKLSYH. A helical membrane pass occupies residues 249–269; the sequence is IFTYIIFFTMYFIPGGVMIYC. Residues 270-314 are Cytoplasmic-facing; it reads YYNIFATVKSGDKQFGKAVKEMAHEDVKNKAQQERQRKNEIKTAK. A helical membrane pass occupies residues 315 to 335; sequence IAFIVISLFMSAWTPYAVVSA. Residues 336 to 351 are Extracellular-facing; that stretch reads LGTLGYQDLVTPYLQS. A helical membrane pass occupies residues 352–372; sequence IPAMFAKSSAVYSPIVYAITY. Lys-358 is subject to N6-(retinylidene)lysine. Over 373–706 the chain is Cytoplasmic; the sequence is PKFREAVKKH…LSEAHDETVL (334 aa). Disordered regions lie at residues 393-446, 571-599, and 630-658; these read SEEE…RQDT, RTESGYDRSQDSQRKKVVGDTHRSRSFNT, and QSSEKHEYDNPAFDEGITEVDTDSENETE. Composition is skewed to low complexity over residues 404 to 418 and 426 to 442; these read QSSASASMSMTQTTA and SVDSGSSVSVDDSSGVS. The span at 571 to 593 shows a compositional bias: basic and acidic residues; the sequence is RTESGYDRSQDSQRKKVVGDTHR. A compositionally biased stretch (acidic residues) spans 645–658; the sequence is GITEVDTDSENETE.

The protein belongs to the G-protein coupled receptor 1 family. Opsin subfamily. In terms of tissue distribution, expressed in Joseph cells and photoreceptor cells of the dorsal ocelli.

Its subcellular location is the cell membrane. Photoreceptor implicated in non-image-forming responses to light. Photoisomerizes covalently bound all-trans retinal back to 11-cis retinal. Most likely coupled to the G(q) signaling cascade. The polypeptide is Melanopsin (Branchiostoma belcheri (Amphioxus)).